Here is a 327-residue protein sequence, read N- to C-terminus: Ribosomal RNA small subunit methyltransferase H (327 aa).

Residues 41–43, Asp60, Tyr87, Asp108, and Gln115 contribute to the S-adenosyl-L-methionine site; that span reads GGH. The interval 292 to 327 is disordered; that stretch reads AERADEQETLENPRAASARLRAVERLRETTTPGSAR.

The protein belongs to the methyltransferase superfamily. RsmH family.

The protein localises to the cytoplasm. It carries out the reaction cytidine(1402) in 16S rRNA + S-adenosyl-L-methionine = N(4)-methylcytidine(1402) in 16S rRNA + S-adenosyl-L-homocysteine + H(+). Functionally, specifically methylates the N4 position of cytidine in position 1402 (C1402) of 16S rRNA. The chain is Ribosomal RNA small subunit methyltransferase H from Kocuria rhizophila (strain ATCC 9341 / DSM 348 / NBRC 103217 / DC2201).